We begin with the raw amino-acid sequence, 345 residues long: MSVAVGIPYVCFFIILSVVGIIGNVIVIYAIAGDRNMRKSVMNILLLNLAVADLANLIFTIPEWIPPVFFGSTDWLFPSFLCPVCRYLECVFLFASISTQMIVCIERYIAIVLPMQARQLCSRRNVLITVLVDWIFVACFASPYAVWHSVKTKDRNTNSLRFKLFQLSATCSNTVGKSTWWQGYKLTEFLAFYFVPCFIITVVYTKVAKCLWCKDPTLQCETRSCLDNKSSSRSSDALRTRRNVVKMLIACVAVYFVCYSPIQVIFLSKAVLNVTIHPPYDFILLMNALAMTCSASNPLLYTLFSQKFRRRLRDVLYCPSDVENETKTYYSINNTSIVGPRASFN.

Residues Met1–Cys11 are Extracellular-facing. The helical transmembrane segment at Phe12–Ala32 threads the bilayer. The Cytoplasmic segment spans residues Gly33–Ser40. A helical transmembrane segment spans residues Val41 to Ile61. At Pro62–Cys90 the chain is on the extracellular side. An intrachain disulfide couples Cys82 to Cys171. The helical transmembrane segment at Val91–Ile111 threads the bilayer. The Cytoplasmic portion of the chain corresponds to Val112–Asn125. The helical transmembrane segment at Val126–Val146 threads the bilayer. At Trp147–Thr187 the chain is on the extracellular side. The chain crosses the membrane as a helical span at residues Glu188–Ala208. Over Lys209 to Lys246 the chain is Cytoplasmic. The chain crosses the membrane as a helical span at residues Met247–Leu267. Residues Ser268–Asp281 lie on the Extracellular side of the membrane. Residues Phe282–Phe304 form a helical membrane-spanning segment. The Cytoplasmic portion of the chain corresponds to Ser305–Asn345.

Belongs to the G-protein coupled receptor 1 family. In terms of tissue distribution, expressed in pharyngeal muscle and AWC, ASG, ASE, ASI, and ASJ sensory neurons. Expressed in ASI neuron. Expressed in AFD neurons and in AVK interneuron.

It is found in the cell membrane. Probable receptor for neuropeptide ligand nlp-8 that plays a role in octopamine signaling and specifically, the octopamine inhibition of aversion responses in olfactory sensory neurons. Plays a crucial role in daf-7 expression. Acts in concert with gpa-4 to activate TGF-beta-like daf-7 secretion in the ASI neuron, thereby promoting larval development and inhibition of dauer diapause. Suppresses immune response against pathogenic infection by inhibiting transcription regulators elt-2 and hlh-30 in ASJ neuron. Promotes pathogen avoidance behavior via intestinal gon-2, independent of aerotaxis. In Caenorhabditis elegans, this protein is Neuropeptide receptor 15 (npr-15).